The primary structure comprises 363 residues: Peptide chain release factor 1 (363 aa).

Glutamine 237 is modified (N5-methylglutamine). The span at glutamate 287–leucine 299 shows a compositional bias: basic and acidic residues. Residues glutamate 287 to serine 306 form a disordered region.

Belongs to the prokaryotic/mitochondrial release factor family. Methylated by PrmC. Methylation increases the termination efficiency of RF1.

The protein resides in the cytoplasm. Peptide chain release factor 1 directs the termination of translation in response to the peptide chain termination codons UAG and UAA. The polypeptide is Peptide chain release factor 1 (Ruthia magnifica subsp. Calyptogena magnifica).